The chain runs to 255 residues: Myogenic factor 5 (255 aa).

Positions 83–134 (DRRKAATMRERRRLKKVNQAFETLKRCTTTNPNQRLPKVEILRNAIRYIESL) constitute a bHLH domain. The segment at 226-249 (DTASLSPATSANSQPATPGPSSSR) is disordered.

Efficient DNA binding requires dimerization with another bHLH protein.

Its subcellular location is the nucleus. Its function is as follows. Acts as a transcriptional activator that promotes transcription of muscle-specific target genes and plays a role in muscle differentiation. Together with MYOG and MYOD1, co-occupies muscle-specific gene promoter core region during myogenesis. Induces fibroblasts to differentiate into myoblasts. Probable sequence specific DNA-binding protein. This is Myogenic factor 5 (Myf5) from Mus musculus (Mouse).